Reading from the N-terminus, the 145-residue chain is Transcription antitermination protein NusB (145 aa).

This sequence belongs to the NusB family.

In terms of biological role, involved in transcription antitermination. Required for transcription of ribosomal RNA (rRNA) genes. Binds specifically to the boxA antiterminator sequence of the ribosomal RNA (rrn) operons. This Burkholderia mallei (strain NCTC 10247) protein is Transcription antitermination protein NusB.